A 471-amino-acid chain; its full sequence is MVDWTEKYRPASLSEVRGNDTARDALAEWAETWPDHREAVVVHGSPGIGKTSAAHALANDAGWDVVELNASDQRTADVVERVAGEAARSGTLTGGSGGRKLVLLDEADNLHGNIDRGGSAAITRLVDDAPQPIVLVANEYYEMSSSLRSACREIEFRDVSKRSIVPVLRDVCRREDVTYEEDALAAIAEQNAGDLRSAVNDLQALAEQDRTLTADDVVMGERDRTEGVFDYLDDVIATHSAREALQAAYDVDETPDDLLSWVADNVPKDYRGGELADAYEFLSNADVWLGRVRATQNYAYWRYATDNVAAGVAAARRHDHGGWTRYGPPSYWRKLGSSRATREKRDYVARHIAETAGCSMATARNDVLPFLRVLTHHCKNRELTVAMAAAYELDTEHVAFVTGSGETTNKVASIVADAEERRTDAAVDHSEGAFAGAVREDNTDEDSAADETTDGDEDTGADSQRGLDEFF.

Residue 44-51 coordinates ATP; sequence GSPGIGKT. The span at 422–431 shows a compositional bias: basic and acidic residues; sequence RTDAAVDHSE. Positions 422–471 are disordered; the sequence is RTDAAVDHSEGAFAGAVREDNTDEDSAADETTDGDEDTGADSQRGLDEFF. Residues 442-460 show a composition bias toward acidic residues; it reads NTDEDSAADETTDGDEDTG.

Belongs to the activator 1 small subunits family. RfcL subfamily. As to quaternary structure, heteromultimer composed of small subunits (RfcS) and large subunits (RfcL).

Part of the RFC clamp loader complex which loads the PCNA sliding clamp onto DNA. The chain is Replication factor C large subunit from Halobacterium salinarum (strain ATCC 29341 / DSM 671 / R1).